Here is a 352-residue protein sequence, read N- to C-terminus: Guanine nucleotide-binding protein alpha-7 subunit (352 aa).

Glycine 2 carries N-myristoyl glycine lipidation. Cysteine 4 carries S-palmitoyl cysteine lipidation. A G-alpha domain is found at 32–352; that stretch reads RIIKLLLLGA…AKNLKSMGLC (321 aa). The G1 motif stretch occupies residues 35 to 48; sequence KLLLLGAGESGKST. GTP-binding positions include 40-47, 174-180, 199-203, 268-271, and alanine 324; these read GAGESGKS, LRTRIKT, DVGGQ, and NKKD. Mg(2+) is bound by residues serine 47 and threonine 180. Positions 172-180 are G2 motif; that stretch reads DLLRTRIKT. A G3 motif region spans residues 195-204; it reads FRVIDVGGQR. Residues 264–271 are G4 motif; that stretch reads ILFLNKKD. The tract at residues 322 to 327 is G5 motif; sequence TCATDT.

It belongs to the G-alpha family. G(i/o/t/z) subfamily. As to quaternary structure, g proteins are composed of 3 units; alpha, beta and gamma. The alpha chain contains the guanine nucleotide binding site.

Its function is as follows. Guanine nucleotide-binding proteins (G proteins) are involved as modulators or transducers in various transmembrane signaling systems. The protein is Guanine nucleotide-binding protein alpha-7 subunit (gpa-7) of Caenorhabditis elegans.